The chain runs to 526 residues: Exodeoxyribonuclease 7 large subunit (526 aa).

A disordered region spans residues 496–526; sequence GAMTTEGGTPPAGAKKRSAKPADPTKQGSLF.

Belongs to the XseA family. Heterooligomer composed of large and small subunits.

The protein localises to the cytoplasm. It catalyses the reaction Exonucleolytic cleavage in either 5'- to 3'- or 3'- to 5'-direction to yield nucleoside 5'-phosphates.. Bidirectionally degrades single-stranded DNA into large acid-insoluble oligonucleotides, which are then degraded further into small acid-soluble oligonucleotides. This Rhizobium etli (strain CIAT 652) protein is Exodeoxyribonuclease 7 large subunit.